Consider the following 117-residue polypeptide: Large ribosomal subunit protein bL20c (117 aa).

Belongs to the bacterial ribosomal protein bL20 family.

It is found in the plastid. Its subcellular location is the chloroplast. Functionally, binds directly to 23S ribosomal RNA and is necessary for the in vitro assembly process of the 50S ribosomal subunit. It is not involved in the protein synthesizing functions of that subunit. The polypeptide is Large ribosomal subunit protein bL20c (Citrus sinensis (Sweet orange)).